We begin with the raw amino-acid sequence, 215 residues long: Beta-crystallin A3 (215 aa).

M1 carries the post-translational modification N-acetylmethionine. The disordered stretch occupies residues 1–24 (METQTVQQELESLPTTKMAQTNPM). Positions 1–30 (METQTVQQELESLPTTKMAQTNPMPGSVGP) are N-terminal arm. E2 is modified (N-acetylalanine). Beta/gamma crystallin 'Greek key' domains lie at 31 to 70 (WKIT…KVEC) and 71 to 117 (GAWV…RPIC). C82 and C117 each carry S-glutathionyl cysteine; alternate. S-methylcysteine; alternate is present on residues C82 and C117. The segment at 118-123 (SANHKE) is connecting peptide. Beta/gamma crystallin 'Greek key' domains are found at residues 124–165 (SKIT…KIQC) and 166–214 (GAWV…RRIQ).

The protein belongs to the beta/gamma-crystallin family. As to quaternary structure, homo/heterodimer, or complexes of higher-order. The structure of beta-crystallin oligomers seems to be stabilized through interactions between the N-terminal arms. Interacts with CRYBA1. Post-translationally, specific cleavages in the N-terminal arm occur during lens maturation and give rise to several truncated forms. Isoform A1 contains a N-acetylalanine at position 2.

In terms of biological role, crystallins are the dominant structural components of the vertebrate eye lens. In Bos taurus (Bovine), this protein is Beta-crystallin A3.